Reading from the N-terminus, the 169-residue chain is NAD(P)H-quinone oxidoreductase subunit J, chloroplastic (169 aa).

The protein belongs to the complex I 30 kDa subunit family. NDH is composed of at least 16 different subunits, 5 of which are encoded in the nucleus.

It localises to the plastid. The protein resides in the chloroplast thylakoid membrane. It carries out the reaction a plastoquinone + NADH + (n+1) H(+)(in) = a plastoquinol + NAD(+) + n H(+)(out). The catalysed reaction is a plastoquinone + NADPH + (n+1) H(+)(in) = a plastoquinol + NADP(+) + n H(+)(out). NDH shuttles electrons from NAD(P)H:plastoquinone, via FMN and iron-sulfur (Fe-S) centers, to quinones in the photosynthetic chain and possibly in a chloroplast respiratory chain. The immediate electron acceptor for the enzyme in this species is believed to be plastoquinone. Couples the redox reaction to proton translocation, and thus conserves the redox energy in a proton gradient. In Marchantia polymorpha (Common liverwort), this protein is NAD(P)H-quinone oxidoreductase subunit J, chloroplastic.